Here is a 193-residue protein sequence, read N- to C-terminus: Chromophore lyase CpcS/CpeS 4 (193 aa).

It belongs to the CpcS/CpeS biliprotein lyase family.

Its function is as follows. Covalently attaches a chromophore to Cys residue(s) of phycobiliproteins. The sequence is that of Chromophore lyase CpcS/CpeS 4 from Trichodesmium erythraeum (strain IMS101).